Consider the following 120-residue polypeptide: NAD(P)H-quinone oxidoreductase subunit 3, chloroplastic (120 aa).

A run of 3 helical transmembrane segments spans residues 9–29, 64–84, and 88–108; these read IFWA…LISG, MFAL…PWAM, and VLGV…ILGL.

The protein belongs to the complex I subunit 3 family. NDH is composed of at least 16 different subunits, 5 of which are encoded in the nucleus.

It localises to the plastid. Its subcellular location is the chloroplast thylakoid membrane. The enzyme catalyses a plastoquinone + NADH + (n+1) H(+)(in) = a plastoquinol + NAD(+) + n H(+)(out). It carries out the reaction a plastoquinone + NADPH + (n+1) H(+)(in) = a plastoquinol + NADP(+) + n H(+)(out). Functionally, NDH shuttles electrons from NAD(P)H:plastoquinone, via FMN and iron-sulfur (Fe-S) centers, to quinones in the photosynthetic chain and possibly in a chloroplast respiratory chain. The immediate electron acceptor for the enzyme in this species is believed to be plastoquinone. Couples the redox reaction to proton translocation, and thus conserves the redox energy in a proton gradient. This chain is NAD(P)H-quinone oxidoreductase subunit 3, chloroplastic, found in Arabidopsis thaliana (Mouse-ear cress).